The sequence spans 450 residues: Keratin, type I cytoskeletal 25 (450 aa).

The segment covering 1-11 (MSLRLSSASRR) has biased composition (low complexity). The tract at residues 1–20 (MSLRLSSASRRSCPRPTTGS) is disordered. The head stretch occupies residues 1-78 (MSLRLSSASR…VNERGLLSGN (78 aa)). Residues 79–114 (EKVTMQNLNDRLASYLDSVHALEEANADLEQKIKGW) are coil 1A. The 316-residue stretch at 79-394 (EKVTMQNLND…LLIGGDDGAC (316 aa)) folds into the IF rod domain. The tract at residues 115-136 (YEKFGPGSCRGLDHDYSRYFPI) is linker 1. Residues 137–228 (IDDLKNQIIA…KNHKEEMQVL (92 aa)) are coil 1B. Residues 229-251 (QCAAGGNVNVEMNAAPGVDLTVL) form a linker 12 region. Residues 252-390 (LNNMRAEYEA…ETYCLLIGGD (139 aa)) are coil 2. The interval 391–450 (DGACKSGGYKSKDYGSGNVGSQVKDPAKAIVVKKVLEEVDQRSKILTTRLHSLEEKSQSN) is tail. A Phosphoserine modification is found at Ser442.

This sequence belongs to the intermediate filament family. As to quaternary structure, heterodimer of a type I and a type II keratin. Heterodimer with type II keratin KRT5 leading to the formation of keratin intermediate filament (KIF) network. Interacts with KRT6A to form filaments. As to expression, strongly expressed in skin and scalp, and weak expression observed in thymus and tongue. In the hair follicle, expressed in Henle layer, Huxley layer and in the inner root sheath cuticle of the hair follicle. Expression extends from the bulb region up to the point of differentiation into the three layers. Also present in the medulla of beard hair (at protein level).

It is found in the cytoplasm. Functionally, essential for the proper assembly of type I and type II keratin protein complexes and formation of keratin intermediate filaments in the inner root sheath (irs). Plays a role in the cytoskeleton organization. This chain is Keratin, type I cytoskeletal 25, found in Homo sapiens (Human).